We begin with the raw amino-acid sequence, 510 residues long: UDP-N-acetylmuramoyl-tripeptide--D-alanyl-D-alanine ligase (510 aa).

136–142 (GSSGKTS) contacts ATP.

The protein belongs to the MurCDEF family. MurF subfamily.

It localises to the cytoplasm. It carries out the reaction D-alanyl-D-alanine + UDP-N-acetyl-alpha-D-muramoyl-L-alanyl-gamma-D-glutamyl-meso-2,6-diaminopimelate + ATP = UDP-N-acetyl-alpha-D-muramoyl-L-alanyl-gamma-D-glutamyl-meso-2,6-diaminopimeloyl-D-alanyl-D-alanine + ADP + phosphate + H(+). Its pathway is cell wall biogenesis; peptidoglycan biosynthesis. Involved in cell wall formation. Catalyzes the final step in the synthesis of UDP-N-acetylmuramoyl-pentapeptide, the precursor of murein. In Mycobacterium tuberculosis (strain CDC 1551 / Oshkosh), this protein is UDP-N-acetylmuramoyl-tripeptide--D-alanyl-D-alanine ligase.